Consider the following 262-residue polypeptide: MTLQARNLTLARGGAPILTDVSLTLAPGTLVGLLGANGAGKSTLLAALAGELAPRSGQVFLGDADLATLNARQLARRRAVLPQKPSLSFDLGVSDVVGMGAYPFPELDPAAVRQLVRDALEQAGVTHLAQRRYPQLSGGEQQRVQFARVLAQCHAMHAPGQTRYLMLDEPISNLDPRHQMELLATARALAHEAGMGVLVIVHDINQAARWCDTLALLADGRLAALGPPADVLTPDHMRRVYGIEADVLAHPTLPGRLLVLAR.

An ABC transporter domain is found at 3-244 (LQARNLTLAR…DHMRRVYGIE (242 aa)). 35–42 (GANGAGKS) contacts ATP.

Belongs to the ABC transporter superfamily. Heme (hemin) importer (TC 3.A.1.14.5) family. In terms of assembly, the complex is composed of two ATP-binding proteins (HmuV), two transmembrane proteins (HmuU) and a solute-binding protein (HmuT).

It localises to the cell inner membrane. In terms of biological role, part of the ABC transporter complex HmuTUV involved in hemin import. Responsible for energy coupling to the transport system. The chain is Hemin import ATP-binding protein HmuV from Bordetella bronchiseptica (strain ATCC BAA-588 / NCTC 13252 / RB50) (Alcaligenes bronchisepticus).